The sequence spans 617 residues: V-type proton ATPase catalytic subunit A (617 aa).

Position 250–257 (250–257 (GAFGCGKT)) interacts with ATP. Serine 384 carries the post-translational modification Phosphoserine; by AMPK.

This sequence belongs to the ATPase alpha/beta chains family. V-ATPase is a heteromultimeric enzyme made up of two complexes: the ATP-hydrolytic V1 complex and the proton translocation V0 complex. The V1 complex consists of three catalytic AB heterodimers that form a heterohexamer, three peripheral stalks each consisting of EG heterodimers, one central rotor including subunits D and F, and the regulatory subunits C and H. The proton translocation complex V0 consists of the proton transport subunit a, a ring of proteolipid subunits c9c'', rotary subunit d, subunits e and f, and the accessory subunits ATP6AP1/Ac45 and ATP6AP2/PRR. Interacts with the V0 complex V-ATPase subunit a4 ATP6V0A4. Interacts with WFS1. Interacts with alpha-crystallin B chain/CRYAB and with MTOR, forming a ternary complex. Phosphorylation at Ser-384 by AMPK down-regulates its enzyme activity.

The protein resides in the cytoplasm. It localises to the cytosol. The protein localises to the cytoplasmic vesicle. Its subcellular location is the secretory vesicle. It is found in the clathrin-coated vesicle membrane. The protein resides in the lysosome. It carries out the reaction ATP + H2O + 4 H(+)(in) = ADP + phosphate + 5 H(+)(out). Its activity is regulated as follows. ATP hydrolysis occurs at the interface between the nucleotide-binding domains of subunits A and B. ATP hydrolysis triggers a conformational change in the subunits D and F, which induces a shift of subunit d. The c-ring is subsequently rotated and results in a continuous proton translocation across the membrane. Functionally, catalytic subunit of the V1 complex of vacuolar(H+)-ATPase (V-ATPase), a multisubunit enzyme composed of a peripheral complex (V1) that hydrolyzes ATP and a membrane integral complex (V0) that translocates protons. V-ATPase is responsible for acidifying and maintaining the pH of intracellular compartments and in some cell types, is targeted to the plasma membrane, where it is responsible for acidifying the extracellular environment. In aerobic conditions, involved in intracellular iron homeostasis, thus triggering the activity of Fe(2+) prolyl hydroxylase (PHD) enzymes, and leading to HIF1A hydroxylation and subsequent proteasomal degradation. May play a role in neurite development and synaptic connectivity. This Mus musculus (Mouse) protein is V-type proton ATPase catalytic subunit A (Atp6v1a).